We begin with the raw amino-acid sequence, 309 residues long: DNA replication terminus site-binding protein (309 aa).

The protein belongs to the Tus family.

It is found in the cytoplasm. In terms of biological role, trans-acting protein required for termination of DNA replication. Binds to DNA replication terminator sequences (terA to terF) to prevent the passage of replication forks. The termination efficiency will be affected by the affinity of this protein for the terminator sequence. The sequence is that of DNA replication terminus site-binding protein from Yersinia enterocolitica serotype O:8 / biotype 1B (strain NCTC 13174 / 8081).